The following is a 910-amino-acid chain: Protein translocase subunit SecA 1 (910 aa).

Residues Gln-86, 104-108 (GEGKT), and Asp-512 each bind ATP. Residues Cys-894, Cys-896, Cys-905, and His-906 each contribute to the Zn(2+) site.

Belongs to the SecA family. In terms of assembly, monomer and homodimer. Part of the essential Sec protein translocation apparatus which comprises SecA, SecYEG and auxiliary proteins SecDF-YajC and YidC. Zn(2+) serves as cofactor.

It is found in the cell inner membrane. It localises to the cytoplasm. It carries out the reaction ATP + H2O + cellular proteinSide 1 = ADP + phosphate + cellular proteinSide 2.. Its function is as follows. Part of the Sec protein translocase complex. Interacts with the SecYEG preprotein conducting channel. Has a central role in coupling the hydrolysis of ATP to the transfer of proteins into and across the cell membrane, serving both as a receptor for the preprotein-SecB complex and as an ATP-driven molecular motor driving the stepwise translocation of polypeptide chains across the membrane. The polypeptide is Protein translocase subunit SecA 1 (Bordetella avium (strain 197N)).